A 122-amino-acid chain; its full sequence is Large ribosomal subunit protein uL14 (122 aa).

Belongs to the universal ribosomal protein uL14 family. As to quaternary structure, part of the 50S ribosomal subunit. Forms a cluster with proteins L3 and L19. In the 70S ribosome, L14 and L19 interact and together make contacts with the 16S rRNA in bridges B5 and B8.

Functionally, binds to 23S rRNA. Forms part of two intersubunit bridges in the 70S ribosome. In Nautilia profundicola (strain ATCC BAA-1463 / DSM 18972 / AmH), this protein is Large ribosomal subunit protein uL14.